We begin with the raw amino-acid sequence, 319 residues long: Putative peptide permease protein BRA0408/BS1330_II0405 (319 aa).

The next 6 membrane-spanning stretches (helical) occupy residues 9-29, 102-122, 138-158, 182-202, 242-262, and 284-304; these read LLIG…LLQL, LLLM…TGII, LALL…LYVF, LLRH…ALIM, LPVV…AIFI, and YPVI…VNIL. In terms of domain architecture, ABC transmembrane type-1 spans 98–305; the sequence is IGPTLLLMAA…ACVIIVNILT (208 aa).

This sequence belongs to the binding-protein-dependent transport system permease family. The complex is composed of two ATP-binding proteins (BRA0404 and BRA0405), two transmembrane proteins (BRA0407 and BRA0408) and a solute-binding protein (BRA0409).

It is found in the cell inner membrane. Functionally, probably part of an ABC transporter complex that could be involved in peptide import. Probably responsible for the translocation of the substrate across the membrane. In Brucella suis biovar 1 (strain 1330), this protein is Putative peptide permease protein BRA0408/BS1330_II0405.